The chain runs to 311 residues: Ferritin-like catalase Nec2 (311 aa).

The first 25 residues, 1–25, serve as a signal peptide directing secretion; sequence MAFLSNMAMFITMLMFSSMMHPCFS. Residues Asn-128, Asn-257, and Asn-289 are each glycosylated (N-linked (GlcNAc...) asparagine).

As to quaternary structure, forms homomultimers. As to expression, observed in all flowers organs; mainly expressed in nectaries and, to a lower extent, in petals and ovules, as well as in stigmas and calyx at low levels.

It carries out the reaction 2 H2O2 = O2 + 2 H2O. Functionally, involved in the production of blood-red nectar containing the alkaloid nesocodin and that serves as a visual attractant for pollinator visitation, including vertebrates such as Phelsuma geckos. The nectar is initially acidic and pale yellow, but slowly becomes alkaline before turning into red within 24 hours. Together with NEC1 and NEC3, facilitates the condensation of sinapaldehyde ((E)-3,5-dimethoxy-4-hydroxycinnamaldehyde) and proline to form nesocodin, a pigment with a stable imine bond. Protects nesocodin from degradation by hydrogen peroxide H(2)O(2) by catalyzing the degradation of H(2)O(2) into water H(2)O and dioxygene O(2). In Nesocodon mauritianus (Blue Mauritius bellflower), this protein is Ferritin-like catalase Nec2.